The chain runs to 220 residues: MEEEEHEVYGGEIPDVGEMDGDMEALNPDLDMAAADDDAVKELDEMKKRLKEMEDEAAALREMQAKVEKEMGAQDPASIAANQAGKEEVDARSVFVGNVDYACTPEEVQQHFQTCGTVHRVTILTDKFGQPKGFAYVEFVEVEAVQEALQLNESELHGRQLKVLQKRTNVPGLKQFRGRRFNPYMGYRFRRPFMSPYMYSPYGYGKAPRFRRPMRYMPYQ.

The interval 1–24 (MEEEEHEVYGGEIPDVGEMDGDME) is disordered. Positions 34-74 (AADDDAVKELDEMKKRLKEMEDEAAALREMQAKVEKEMGAQ) form a coiled coil. Positions 78–219 (SIAANQAGKE…FRRPMRYMPY (142 aa)) are necessary for homooligomerization. Residues 92-168 (RSVFVGNVDY…RQLKVLQKRT (77 aa)) enclose the RRM domain. Residues 165–172 (QKRTNVPG) carry the Nuclear localization signal motif.

In terms of assembly, monomer and homooligomer. Binds RNA as a monomer and oligomerizes when bound to poly(A). Forms a complex with cleavage and polyadenylation specificity factor (CPSF) subunits PAPS2, FIPS5, PABN3 and PABN1. Interacts with CSP3.

It is found in the nucleus speckle. The protein resides in the cytoplasm. In terms of biological role, involved in the 3'-end formation of mRNA precursors (pre-mRNA) by the addition of a poly(A) tail of 200-250 nt to the upstream cleavage product. Stimulates poly(A) polymerase (PAPOLA) conferring processivity on the poly(A) tail elongation reaction and also controls the poly(A) tail length. Increases the affinity of poly(A) polymerase for RNA. Binds to poly(A) and to poly(G) with high affinity. May protect the poly(A) tail from degradation. The chain is Polyadenylate-binding protein 2 from Arabidopsis thaliana (Mouse-ear cress).